Here is a 157-residue protein sequence, read N- to C-terminus: 3-hydroxyacyl-[acyl-carrier-protein] dehydratase FabZ (157 aa).

Residue His-58 is part of the active site.

This sequence belongs to the thioester dehydratase family. FabZ subfamily.

It is found in the cytoplasm. It catalyses the reaction a (3R)-hydroxyacyl-[ACP] = a (2E)-enoyl-[ACP] + H2O. Its function is as follows. Involved in unsaturated fatty acids biosynthesis. Catalyzes the dehydration of short chain beta-hydroxyacyl-ACPs and long chain saturated and unsaturated beta-hydroxyacyl-ACPs. This chain is 3-hydroxyacyl-[acyl-carrier-protein] dehydratase FabZ, found in Rhizorhabdus wittichii (strain DSM 6014 / CCUG 31198 / JCM 15750 / NBRC 105917 / EY 4224 / RW1) (Sphingomonas wittichii).